The primary structure comprises 910 residues: Protein translocase subunit SecA (910 aa).

ATP-binding positions include glutamine 89, 107 to 111 (GEGKT), and aspartate 502. Residues cysteine 894, cysteine 896, cysteine 905, and histidine 906 each contribute to the Zn(2+) site.

Belongs to the SecA family. As to quaternary structure, monomer and homodimer. Part of the essential Sec protein translocation apparatus which comprises SecA, SecYEG and auxiliary proteins SecDF-YajC and YidC. The cofactor is Zn(2+).

It is found in the cell inner membrane. It localises to the cytoplasm. The catalysed reaction is ATP + H2O + cellular proteinSide 1 = ADP + phosphate + cellular proteinSide 2.. Part of the Sec protein translocase complex. Interacts with the SecYEG preprotein conducting channel. Has a central role in coupling the hydrolysis of ATP to the transfer of proteins into and across the cell membrane, serving both as a receptor for the preprotein-SecB complex and as an ATP-driven molecular motor driving the stepwise translocation of polypeptide chains across the membrane. The chain is Protein translocase subunit SecA from Chelativorans sp. (strain BNC1).